An 87-amino-acid polypeptide reads, in one-letter code: RNA-binding protein Hfq (87 aa).

Residues 9–68 (DPFLNALRRERIPVSIYLVNGIKLQGQIESFDQFVILLKNTVSQMVYKHAISTVVPARAV) form the Sm domain.

This sequence belongs to the Hfq family. As to quaternary structure, homohexamer.

RNA chaperone that binds small regulatory RNA (sRNAs) and mRNAs to facilitate mRNA translational regulation in response to envelope stress, environmental stress and changes in metabolite concentrations. Also binds with high specificity to tRNAs. This Aeromonas salmonicida (strain A449) protein is RNA-binding protein Hfq.